Here is a 339-residue protein sequence, read N- to C-terminus: Bifunctional phosphoglucose/phosphomannose isomerase (339 aa).

Residues 22-164 (ISVNVKAEDI…IEPVDDQIEE (143 aa)) form the SIS domain. D-fructose 6-phosphate is bound by residues Gly41, Ser42, Ser83, Ser85, Thr88, and Arg135. Residue Glu221 is the Proton acceptor of the active site. The D-fructose 6-phosphate site is built by His237 and Lys331. His237 functions as the Proton donor in the catalytic mechanism. Lys331 (proton acceptor) is an active-site residue.

It belongs to the PGI/PMI family. In terms of assembly, homodimer.

It catalyses the reaction alpha-D-glucose 6-phosphate = beta-D-fructose 6-phosphate. The catalysed reaction is D-mannose 6-phosphate = D-fructose 6-phosphate. Functionally, dual specificity isomerase that catalyzes the isomerization of both glucose-6-phosphate and mannose-6-phosphate to fructose-6-phosphate. The protein is Bifunctional phosphoglucose/phosphomannose isomerase of Caldicellulosiruptor bescii (strain ATCC BAA-1888 / DSM 6725 / KCTC 15123 / Z-1320) (Anaerocellum thermophilum).